We begin with the raw amino-acid sequence, 211 residues long: Large ribosomal subunit protein eL13 (211 aa).

K16 is modified (N6-acetyllysine). Phosphoserine occurs at positions 52 and 77. Residues K123 and K145 each participate in a glycyl lysine isopeptide (Lys-Gly) (interchain with G-Cter in SUMO2) cross-link. K174 is covalently cross-linked (Glycyl lysine isopeptide (Lys-Gly) (interchain with G-Cter in SUMO1); alternate). Glycyl lysine isopeptide (Lys-Gly) (interchain with G-Cter in SUMO2); alternate cross-links involve residues K174 and K177. An N6-acetyllysine; alternate modification is found at K177.

Belongs to the eukaryotic ribosomal protein eL13 family. In terms of assembly, component of the 60S large ribosomal subunit (LSU).

It is found in the cytoplasm. Functionally, component of the ribosome, a large ribonucleoprotein complex responsible for the synthesis of proteins in the cell. The small ribosomal subunit (SSU) binds messenger RNAs (mRNAs) and translates the encoded message by selecting cognate aminoacyl-transfer RNA (tRNA) molecules. The large subunit (LSU) contains the ribosomal catalytic site termed the peptidyl transferase center (PTC), which catalyzes the formation of peptide bonds, thereby polymerizing the amino acids delivered by tRNAs into a polypeptide chain. The nascent polypeptides leave the ribosome through a tunnel in the LSU and interact with protein factors that function in enzymatic processing, targeting, and the membrane insertion of nascent chains at the exit of the ribosomal tunnel. As part of the LSU, it is probably required for its formation and the maturation of rRNAs. Plays a role in bone development. The sequence is that of Large ribosomal subunit protein eL13 (RPL13) from Bos taurus (Bovine).